A 475-amino-acid polypeptide reads, in one-letter code: Threonine synthase (475 aa).

Position 120 is an N6-(pyridoxal phosphate)lysine (lysine 120).

It belongs to the threonine synthase family. Requires pyridoxal 5'-phosphate as cofactor.

The enzyme catalyses O-phospho-L-homoserine + H2O = L-threonine + phosphate. Its pathway is amino-acid biosynthesis; L-threonine biosynthesis; L-threonine from L-aspartate: step 5/5. Catalyzes the gamma-elimination of phosphate from L-phosphohomoserine and the beta-addition of water to produce L-threonine. The chain is Threonine synthase (thrC) from Methylobacillus glycogenes.